Consider the following 707-residue polypeptide: Polyribonucleotide nucleotidyltransferase (707 aa).

The Mg(2+) site is built by aspartate 485 and aspartate 491. The KH domain occupies 552–615 (PRITVINIPK…AAIKWIKGIV (64 aa)). The S1 motif domain occupies 621–689 (GEIYEGKVVK…DRGKVKLSMK (69 aa)).

Belongs to the polyribonucleotide nucleotidyltransferase family. Mg(2+) is required as a cofactor.

It is found in the cytoplasm. The catalysed reaction is RNA(n+1) + phosphate = RNA(n) + a ribonucleoside 5'-diphosphate. Its function is as follows. Involved in mRNA degradation. Catalyzes the phosphorolysis of single-stranded polyribonucleotides processively in the 3'- to 5'-direction. In Rhodospirillum centenum (strain ATCC 51521 / SW), this protein is Polyribonucleotide nucleotidyltransferase.